The primary structure comprises 125 residues: MORF4 family-associated protein 1 (125 aa).

Positions E76 to D99 are disordered. The stretch at R94–S124 forms a coiled coil.

This sequence belongs to the MORF4 family-associated protein family. Found in a complex composed of MORF4L1, MRFAP1 and RB1. Interacts via its N-terminus with MORF4L1. Interacts with CSTB and MORF4L2. In terms of tissue distribution, widely expressed in all tissues examined and as early as 7 days during embryonic development.

It is found in the nucleus. It localises to the cytoplasm. Its subcellular location is the perinuclear region. This is MORF4 family-associated protein 1 from Mus musculus (Mouse).